An 843-amino-acid chain; its full sequence is Adenylate cyclase (843 aa).

Residues 1–542 are catalytic; it reads MECNLAQAKQ…NLRQSFPSTI (542 aa). The regulatory stretch occupies residues 549-843; it reads SDLLNQCEIR…VPFKFRQMNK (295 aa).

It belongs to the adenylyl cyclase class-1 family.

The protein resides in the cytoplasm. The catalysed reaction is ATP = 3',5'-cyclic AMP + diphosphate. In terms of biological role, plays an essential role in competence development. The protein is Adenylate cyclase (cyaA) of Haemophilus influenzae (strain ATCC 51907 / DSM 11121 / KW20 / Rd).